The primary structure comprises 384 residues: Alanine racemase (384 aa).

The Proton acceptor; specific for D-alanine role is filled by Lys-39. Residue Lys-39 is modified to N6-(pyridoxal phosphate)lysine. Arg-138 is a binding site for substrate. The Proton acceptor; specific for L-alanine role is filled by Tyr-265. Residue Met-312 coordinates substrate.

The protein belongs to the alanine racemase family. It depends on pyridoxal 5'-phosphate as a cofactor.

The enzyme catalyses L-alanine = D-alanine. Its pathway is amino-acid biosynthesis; D-alanine biosynthesis; D-alanine from L-alanine: step 1/1. Catalyzes the interconversion of L-alanine and D-alanine. May also act on other amino acids. In Staphylococcus carnosus (strain TM300), this protein is Alanine racemase (alr).